Here is an 823-residue protein sequence, read N- to C-terminus: Nuclear factor I family protein (823 aa).

Residues 1–56 (MEPHLKIDVSSASGSTTTGATASTSEAPQDSQAQQTMPPPSSDWSNQFNSPEAVSP) form a disordered region. Positions 10-25 (SSASGSTTTGATASTS) are enriched in low complexity. The span at 26-52 (EAPQDSQAQQTMPPPSSDWSNQFNSPE) shows a compositional bias: polar residues. Residues 61 to 253 (IKCFSPYSQE…DVDTKITLTY (193 aa)) constitute a DNA-binding region (CTF/NF-I). Disordered regions lie at residues 364–408 (PYPI…NDEV), 433–468 (SRTQQNQGAPGTSRQVRPLPDFQSQDSARSPGAFRS), and 777–823 (APPA…NEKK). A compositionally biased stretch (basic and acidic residues) spans 386–396 (PSEKRSRDISS). Residues 433 to 447 (SRTQQNQGAPGTSRQ) show a composition bias toward polar residues. A compositionally biased stretch (low complexity) spans 777–794 (APPACSPSSSNSSLGAAN).

It belongs to the CTF/NF-I family. Expressed in muscles, neurons and intestinal cells.

Its subcellular location is the nucleus. In terms of biological role, probable transcription factor which recognizes and binds the palindromic sequence 5'-TTGGCANNNTGCCAA-3' present in promoters. Plays a role in locomotion, pharyngeal pumping, egg-laying, and life span. The protein is Nuclear factor I family protein of Caenorhabditis elegans.